A 248-amino-acid chain; its full sequence is 14-3-3 protein sigma (248 aa).

Phosphoserine occurs at positions 5, 74, and 248.

It belongs to the 14-3-3 family. In terms of assembly, homodimer. Interacts with KRT17 and SAMSN1. Found in a complex with XPO7, EIF4A1, ARHGAP1, VPS26A, VPS29 and VPS35. Interacts with GAB2. Interacts with SRPK2. Interacts with COPS6. Interacts with COP1; this interaction leads to proteasomal degradation. Interacts with the 'Thr-369' phosphorylated form of DAPK2. Interacts with PI4KB. Interacts with SLITRK1. Interacts with LRRK2; this interaction is dependent on LRRK2 phosphorylation. Interacts with PKP3 (via N-terminus); the interaction maintains the cytoplasmic pool of PKP3, facilitates PKP3 exchange at desmosomes and restricts PKP3 localization to existing desmosome cell junctions. Interacts with LCP2. In terms of processing, ubiquitinated. Ubiquitination by RFFL induces proteasomal degradation and indirectly regulates p53/TP53 activation. In terms of tissue distribution, present mainly in tissues enriched in stratified squamous keratinizing epithelium.

The protein resides in the cytoplasm. Its subcellular location is the nucleus. It localises to the secreted. In terms of biological role, adapter protein implicated in the regulation of a large spectrum of both general and specialized signaling pathways. Binds to a large number of partners, usually by recognition of a phosphoserine or phosphothreonine motif. Binding generally results in the modulation of the activity of the binding partner. Promotes cytosolic retention of GBP1 GTPase by binding to phosphorylated GBP1, thereby inhibiting the innate immune response. Also acts as a TP53/p53-regulated inhibitor of G2/M progression. When bound to KRT17, regulates protein synthesis and epithelial cell growth by stimulating Akt/mTOR pathway. Acts to maintain desmosome cell junction adhesion in epithelial cells via interacting with and sequestering PKP3 to the cytoplasm, thereby restricting its translocation to existing desmosome structures and therefore maintaining desmosome protein homeostasis. Also acts to facilitate PKP3 exchange at desmosome plaques, thereby maintaining keratinocyte intercellular adhesion. May also regulate MDM2 autoubiquitination and degradation and thereby activate p53/TP53. This Homo sapiens (Human) protein is 14-3-3 protein sigma (SFN).